The following is a 300-amino-acid chain: Bis(5'-nucleosyl)-tetraphosphatase, symmetrical (300 aa).

It belongs to the Ap4A hydrolase family.

It catalyses the reaction P(1),P(4)-bis(5'-adenosyl) tetraphosphate + H2O = 2 ADP + 2 H(+). In terms of biological role, hydrolyzes diadenosine 5',5'''-P1,P4-tetraphosphate to yield ADP. This Pseudomonas syringae pv. tomato (strain ATCC BAA-871 / DC3000) protein is Bis(5'-nucleosyl)-tetraphosphatase, symmetrical.